A 90-amino-acid polypeptide reads, in one-letter code: Small ribosomal subunit protein bS16 (90 aa).

Belongs to the bacterial ribosomal protein bS16 family.

This is Small ribosomal subunit protein bS16 from Lactiplantibacillus plantarum (strain ATCC BAA-793 / NCIMB 8826 / WCFS1) (Lactobacillus plantarum).